Reading from the N-terminus, the 148-residue chain is Urease accessory protein UreE (148 aa).

It belongs to the UreE family.

It is found in the cytoplasm. Functionally, involved in urease metallocenter assembly. Binds nickel. Probably functions as a nickel donor during metallocenter assembly. In Aliarcobacter butzleri (strain RM4018) (Arcobacter butzleri), this protein is Urease accessory protein UreE.